The primary structure comprises 261 residues: tRNA(His) guanylyltransferase (261 aa).

The Mg(2+) site is built by Asp29, Gly30, and Asp76. GTP contacts are provided by residues 29–34 and 75–76; these read DGKGFH and SD.

It belongs to the tRNA(His) guanylyltransferase family. Mg(2+) serves as cofactor.

It carries out the reaction a 5'-end ribonucleotide-tRNA(His) + GTP + ATP + H2O = a 5'-end phospho-guanosine-ribonucleotide-tRNA(His) + AMP + 2 diphosphate + H(+). Functionally, adds a GMP to the 5'-end of tRNA(His) after transcription and RNase P cleavage. This chain is tRNA(His) guanylyltransferase (thg1), found in Schizosaccharomyces pombe (strain 972 / ATCC 24843) (Fission yeast).